The primary structure comprises 166 residues: Putative 4-hydroxy-4-methyl-2-oxoglutarate aldolase 1 (166 aa).

N-acetylalanine is present on A2. Residues 81 to 84 and R103 each bind substrate; that span reads GGNP. D104 provides a ligand contact to a divalent metal cation.

Belongs to the class II aldolase/RraA-like family. As to quaternary structure, homotrimer. A divalent metal cation serves as cofactor.

It carries out the reaction 4-hydroxy-4-methyl-2-oxoglutarate = 2 pyruvate. The enzyme catalyses oxaloacetate + H(+) = pyruvate + CO2. Its function is as follows. Catalyzes the aldol cleavage of 4-hydroxy-4-methyl-2-oxoglutarate (HMG) into 2 molecules of pyruvate. Also contains a secondary oxaloacetate (OAA) decarboxylase activity due to the common pyruvate enolate transition state formed following C-C bond cleavage in the retro-aldol and decarboxylation reactions. This is Putative 4-hydroxy-4-methyl-2-oxoglutarate aldolase 1 from Arabidopsis thaliana (Mouse-ear cress).